We begin with the raw amino-acid sequence, 263 residues long: HTH-type transcriptional repressor NanR (263 aa).

The interval 1–23 (MSPMNAFDPQAEDSTTTIGRNLR) is disordered. Positions 30–98 (KKLSEMVEEE…NGERARVSRP (69 aa)) constitute an HTH gntR-type domain. Positions 58–77 (ERELMAFFNVGRPSVREALA) form a DNA-binding region, H-T-H motif.

Belongs to the NanR family.

Its function is as follows. Transcriptional repressor that controls expression of the genes required for the catabolism of sialic acids. The chain is HTH-type transcriptional repressor NanR from Escherichia coli O45:K1 (strain S88 / ExPEC).